The following is a 227-amino-acid chain: Uracil-DNA glycosylase (227 aa).

The active-site Proton acceptor is the Asp-65.

It belongs to the uracil-DNA glycosylase (UDG) superfamily. UNG family.

The protein localises to the cytoplasm. The catalysed reaction is Hydrolyzes single-stranded DNA or mismatched double-stranded DNA and polynucleotides, releasing free uracil.. Excises uracil residues from the DNA which can arise as a result of misincorporation of dUMP residues by DNA polymerase or due to deamination of cytosine. This Bacillus velezensis (strain DSM 23117 / BGSC 10A6 / LMG 26770 / FZB42) (Bacillus amyloliquefaciens subsp. plantarum) protein is Uracil-DNA glycosylase.